The chain runs to 352 residues: Protein RecA (352 aa).

67-74 contacts ATP; the sequence is GPESSGKT. The tract at residues 333 to 352 is disordered; it reads DSTPDFAVDGNDAEETEQDF. Residues 343–352 are compositionally biased toward acidic residues; sequence NDAEETEQDF.

Belongs to the RecA family.

It localises to the cytoplasm. Its function is as follows. Can catalyze the hydrolysis of ATP in the presence of single-stranded DNA, the ATP-dependent uptake of single-stranded DNA by duplex DNA, and the ATP-dependent hybridization of homologous single-stranded DNAs. It interacts with LexA causing its activation and leading to its autocatalytic cleavage. The protein is Protein RecA of Klebsiella pneumoniae (strain 342).